The primary structure comprises 2171 residues: ATP-binding cassette sub-family C member Sur (2171 aa).

Residues 1–36 (MKQLFNIIHCDHLNGHVRSIYDNLNTDICGIDRVRR) are Extracellular-facing. A helical transmembrane segment spans residues 37-57 (VFTFFSIFLLLFGLMFVCSRY). The Cytoplasmic portion of the chain corresponds to 58-71 (KKCHKTLLTFHNGR). The chain crosses the membrane as a helical span at residues 72–92 (AAISLLLLALNSFDLARIFLP). Topologically, residues 93-112 (HQNVRNLNRLFQSSPRDLNY) are extracellular. Residues 113 to 133 (LVVIGSGELWNALFSTLLTLM) form a helical membrane-spanning segment. Topologically, residues 134 to 145 (LMLYHRMVERKK) are cytoplasmic. A helical transmembrane segment spans residues 146-166 (ATVFLYASTAVEALTFALLSN). The Extracellular segment spans residues 167 to 182 (ELFELVRYEDFLELQT). A helical transmembrane segment spans residues 183 to 203 (CLVAMSAMCMVSLAMLDGLTV). The Cytoplasmic portion of the chain corresponds to 204–224 (YKECYHDDYLDDYGKIGYKHS). The chain crosses the membrane as a helical span at residues 225–245 (MATFYSKSCFWWLTPLLWLGY). Residues 246 to 299 (KEPLELEDLGQMKLEDSARSHYDHFLYIYTEKKKKSNSSPSLWYCYIKNSWQMF) are Extracellular-facing. Residues 300–320 (ALGGILKLAGDLFALIGPLAI) traverse the membrane as a helical segment. Topologically, residues 321–447 (QKIVEYIEQL…MTEDTRNIME (127 aa)) are cytoplasmic. The region spanning 344-622 (NEVANVLLST…FPITVPIIIA (279 aa)) is the ABC transmembrane type-1 1 domain. Residues 388–434 (DSSDSAGQVQSTSSTSDEKQKNDDSMATPEHVDNPSEPNISHDIGSI) form a disordered region. Positions 389 to 402 (SSDSAGQVQSTSST) are enriched in polar residues. The span at 403 to 421 (SDEKQKNDDSMATPEHVDN) shows a compositional bias: basic and acidic residues. A helical transmembrane segment spans residues 448–468 (FFLIIHYAWAIPFKIAVVIYL). The Extracellular segment spans residues 469-474 (LYMNLG). Residues 475–495 (ISAVIGSIACIVIMTPLQFFI) traverse the membrane as a helical segment. The Cytoplasmic segment spans residues 496–562 (GNAMSKNAEV…KDATFWTLMA (67 aa)). The chain crosses the membrane as a helical span at residues 563–583 (VLTHIATVLITFVTLGVYVWL). Over 584–600 (HRDQEFDLNASRLFSSL) the chain is Extracellular. A helical membrane pass occupies residues 601 to 621 (ALFQQLTVPLLIFPITVPIII). The Cytoplasmic segment spans residues 622 to 1409 (AARVSTRRLE…KYGKISDDIY (788 aa)). Residues 785–1014 (VSINDGLFTW…QPRITAEWNA (230 aa)) form the ABC transporter 1 domain. 822 to 829 (GKNGSGKT) is an ATP binding site. Residues 1141 to 1151 (RRRHTLGRRGS) show a composition bias toward basic residues. Disordered regions lie at residues 1141-1177 (RRRH…SISG) and 1209-1265 (PRVQ…DHVR). Over residues 1160-1176 (LSGLSTLTATSESSSIS) the composition is skewed to low complexity. Residues 1212–1232 (QSWQPPQHVTHHQPLSRNASS) are compositionally biased toward polar residues. Basic and acidic residues predominate over residues 1242-1251 (DVKKSEEARR). A helical transmembrane segment spans residues 1410-1430 (LMYIRAAGLPIITIFFITALI). The 295-residue stretch at 1421 to 1715 (ITIFFITALI…AVTKSPSELR (295 aa)) folds into the ABC transmembrane type-1 2 domain. At 1431 to 1468 (WQCLRVYTDIWLQQWSNVHGRVASKGHVVLHPSEQDHE) the chain is on the extracellular side. Residues 1469–1489 (VTYYFRMYAAISCVCIIMALV) traverse the membrane as a helical segment. Residues 1490 to 1558 (STPAGQYAGC…QRLLQFTLLC (69 aa)) lie on the Cytoplasmic side of the membrane. Residues 1559 to 1579 (LSAILINVTITPWILVLTLPI) traverse the membrane as a helical segment. Topologically, residues 1580 to 1655 (CGAYYLIQKF…YALLNTSHRW (76 aa)) are extracellular. Residues 1656-1676 (LGVSLDYLGGCIVFVATVTAL) form a helical membrane-spanning segment. Residues 1677–1718 (TAASVSCRRHYEATTSPSASASPSPFETYAVTKSPSELRPSP) are Cytoplasmic-facing. A helical membrane pass occupies residues 1719 to 1739 (SLVGLAINYTLLVPIYLNWVV). Residues 1740 to 2171 (KLLADMEMYA…GLLEKGASKW (432 aa)) are Extracellular-facing. Positions 1766 to 1778 (ADADADADADVDA) are enriched in acidic residues. Disordered regions lie at residues 1766–1844 (ADAD…GHEN) and 1866–1902 (NFHH…DKDK). Basic and acidic residues-rich tracts occupy residues 1793-1804 (EVDRSSQSDAGD) and 1887-1902 (VIKD…DKDK). One can recognise an ABC transporter 2 domain in the interval 1930–2165 (IHFDNVSLRY…EGSVFRGLLE (236 aa)). 1964-1971 (GRTGSGKS) is a binding site for ATP.

It belongs to the ABC transporter superfamily. ABCC family. Conjugate transporter (TC 3.A.1.208) subfamily. In terms of tissue distribution, highly expressed in adult heart. Detected at lower levels in head and abdomen.

It is found in the membrane. Functionally, may function as regulatory subunit of ATP-sensitive potassium channels (KATP) and form KATP channels with a member of the ATP-sensitive inward rectifier potassium channel family. May also have channel activity by itself (in vitro). May protect the heart during hypoxia. May protect against heart failure under conditions of tachycardic stress. The polypeptide is ATP-binding cassette sub-family C member Sur (Sur) (Drosophila melanogaster (Fruit fly)).